The following is a 98-amino-acid chain: Large ribosomal subunit protein uL23 (98 aa).

This sequence belongs to the universal ribosomal protein uL23 family. As to quaternary structure, part of the 50S ribosomal subunit. Contacts protein L29, and trigger factor when it is bound to the ribosome.

Functionally, one of the early assembly proteins it binds 23S rRNA. One of the proteins that surrounds the polypeptide exit tunnel on the outside of the ribosome. Forms the main docking site for trigger factor binding to the ribosome. The chain is Large ribosomal subunit protein uL23 from Streptococcus pneumoniae serotype 19F (strain G54).